The primary structure comprises 133 residues: Large-conductance mechanosensitive channel (133 aa).

The next 2 helical transmembrane spans lie at 10 to 30 and 76 to 96; these read FAVK…AAFG and GIFV…FLVV.

This sequence belongs to the MscL family. In terms of assembly, homopentamer.

The protein resides in the cell inner membrane. Channel that opens in response to stretch forces in the membrane lipid bilayer. May participate in the regulation of osmotic pressure changes within the cell. This is Large-conductance mechanosensitive channel from Chlorobium phaeobacteroides (strain BS1).